Consider the following 146-residue polypeptide: Putative pre-16S rRNA nuclease (146 aa).

The protein belongs to the YqgF nuclease family.

It localises to the cytoplasm. Its function is as follows. Could be a nuclease involved in processing of the 5'-end of pre-16S rRNA. This chain is Putative pre-16S rRNA nuclease, found in Burkholderia thailandensis (strain ATCC 700388 / DSM 13276 / CCUG 48851 / CIP 106301 / E264).